A 131-amino-acid polypeptide reads, in one-letter code: Flagellar assembly factor FliW (131 aa).

Belongs to the FliW family. Interacts with translational regulator CsrA and flagellin(s).

It localises to the cytoplasm. Functionally, acts as an anti-CsrA protein, binds CsrA and prevents it from repressing translation of its target genes, one of which is flagellin. Binds to flagellin and participates in the assembly of the flagellum. This is Flagellar assembly factor FliW from Campylobacter lari (strain RM2100 / D67 / ATCC BAA-1060).